Here is a 184-residue protein sequence, read N- to C-terminus: MDALTLLTTRKSNKKLTAPAPNAEQLERIFEAAMRAPDHGKLHPYHFIVMENESLNKLETLLKAAVVEFDLGEEKLMKAENLAHRAPMVIGVVAKIDPTIAKVPGWEQMLSAGCATYGLQLAAQAQGFDNVWISGKWVNGTALREAFGCREQDRVIALVMIGTGMEKAERECRVIDTKDFVTYL.

FMN-binding positions include 10–12, Arg-35, and His-39; that span reads RKS. 122–127 serves as a coordination point for NAD(+); it reads AAQAQG. 132–134 is a binding site for FMN; the sequence is WIS.

This sequence belongs to the nitroreductase family. Homodimer. Requires FMN as cofactor.

The sequence is that of Putative NAD(P)H nitroreductase HI_1542 from Haemophilus influenzae (strain ATCC 51907 / DSM 11121 / KW20 / Rd).